Here is a 476-residue protein sequence, read N- to C-terminus: Membrane-bound lytic murein transglycosylase F (476 aa).

Residues 1–16 (MIKTLFIILLCGILSA) form the signal peptide. The segment at 17 to 259 (CQPVDIQDVD…HLNEKYFGHV (243 aa)) is non-LT domain. An LT domain region spans residues 260–476 (KRFDYVDTRA…VPAKSHVSAQ (217 aa)). E304 is an active-site residue.

The protein in the N-terminal section; belongs to the bacterial solute-binding protein 3 family. This sequence in the C-terminal section; belongs to the transglycosylase Slt family.

It is found in the cell outer membrane. It carries out the reaction Exolytic cleavage of the (1-&gt;4)-beta-glycosidic linkage between N-acetylmuramic acid (MurNAc) and N-acetylglucosamine (GlcNAc) residues in peptidoglycan, from either the reducing or the non-reducing ends of the peptidoglycan chains, with concomitant formation of a 1,6-anhydrobond in the MurNAc residue.. Murein-degrading enzyme that degrades murein glycan strands and insoluble, high-molecular weight murein sacculi, with the concomitant formation of a 1,6-anhydromuramoyl product. Lytic transglycosylases (LTs) play an integral role in the metabolism of the peptidoglycan (PG) sacculus. Their lytic action creates space within the PG sacculus to allow for its expansion as well as for the insertion of various structures such as secretion systems and flagella. The polypeptide is Membrane-bound lytic murein transglycosylase F (Shewanella frigidimarina (strain NCIMB 400)).